The sequence spans 382 residues: Ribosomal RNA large subunit methyltransferase G (382 aa).

This sequence belongs to the methyltransferase superfamily. RlmG family.

The protein resides in the cytoplasm. It carries out the reaction guanosine(1835) in 23S rRNA + S-adenosyl-L-methionine = N(2)-methylguanosine(1835) in 23S rRNA + S-adenosyl-L-homocysteine + H(+). Functionally, specifically methylates the guanine in position 1835 (m2G1835) of 23S rRNA. In Psychromonas ingrahamii (strain DSM 17664 / CCUG 51855 / 37), this protein is Ribosomal RNA large subunit methyltransferase G.